Reading from the N-terminus, the 198-residue chain is tRNA (pseudouridine(54)-N(1))-methyltransferase (198 aa).

S-adenosyl-L-methionine-binding residues include Leu-134 and Gly-155.

This sequence belongs to the methyltransferase superfamily. TrmY family. In terms of assembly, homodimer.

The protein resides in the cytoplasm. The enzyme catalyses pseudouridine(54) in tRNA + S-adenosyl-L-methionine = N(1)-methylpseudouridine(54) in tRNA + S-adenosyl-L-homocysteine + H(+). In terms of biological role, specifically catalyzes the N1-methylation of pseudouridine at position 54 (Psi54) in tRNAs. The chain is tRNA (pseudouridine(54)-N(1))-methyltransferase from Thermococcus kodakarensis (strain ATCC BAA-918 / JCM 12380 / KOD1) (Pyrococcus kodakaraensis (strain KOD1)).